The following is a 397-amino-acid chain: DNA-directed RNA polymerase subunit Rpo1C (397 aa).

This sequence belongs to the RNA polymerase beta' chain family. As to quaternary structure, part of the RNA polymerase complex. An artificial construct of the RNAP clamp domain (including part of this protein) contacts transcription elongation factors Spt4 and Spt5.

The protein resides in the cytoplasm. It catalyses the reaction RNA(n) + a ribonucleoside 5'-triphosphate = RNA(n+1) + diphosphate. DNA-dependent RNA polymerase (RNAP) catalyzes the transcription of DNA into RNA using the four ribonucleoside triphosphates as substrates. Forms part of the jaw domain. The chain is DNA-directed RNA polymerase subunit Rpo1C from Pyrococcus furiosus (strain ATCC 43587 / DSM 3638 / JCM 8422 / Vc1).